Reading from the N-terminus, the 577-residue chain is Arginine--tRNA ligase (577 aa).

Residues 122–132 (PNVAKEMHVGH) carry the 'HIGH' region motif.

This sequence belongs to the class-I aminoacyl-tRNA synthetase family. As to quaternary structure, monomer.

The protein resides in the cytoplasm. The catalysed reaction is tRNA(Arg) + L-arginine + ATP = L-arginyl-tRNA(Arg) + AMP + diphosphate. The protein is Arginine--tRNA ligase of Salmonella schwarzengrund (strain CVM19633).